A 148-amino-acid chain; its full sequence is Ribosomal RNA large subunit methyltransferase H (148 aa).

Residues Leu-62, Gly-94, and 113–118 (LSLLTL) each bind S-adenosyl-L-methionine.

Belongs to the RNA methyltransferase RlmH family. Homodimer.

Its subcellular location is the cytoplasm. The catalysed reaction is pseudouridine(1915) in 23S rRNA + S-adenosyl-L-methionine = N(3)-methylpseudouridine(1915) in 23S rRNA + S-adenosyl-L-homocysteine + H(+). Specifically methylates the pseudouridine at position 1915 (m3Psi1915) in 23S rRNA. This chain is Ribosomal RNA large subunit methyltransferase H, found in Deinococcus geothermalis (strain DSM 11300 / CIP 105573 / AG-3a).